The primary structure comprises 507 residues: Bifunctional purine biosynthesis protein PurH (507 aa).

The MGS-like domain maps to Met1–Ala149.

Belongs to the PurH family.

The catalysed reaction is (6R)-10-formyltetrahydrofolate + 5-amino-1-(5-phospho-beta-D-ribosyl)imidazole-4-carboxamide = 5-formamido-1-(5-phospho-D-ribosyl)imidazole-4-carboxamide + (6S)-5,6,7,8-tetrahydrofolate. It carries out the reaction IMP + H2O = 5-formamido-1-(5-phospho-D-ribosyl)imidazole-4-carboxamide. It functions in the pathway purine metabolism; IMP biosynthesis via de novo pathway; 5-formamido-1-(5-phospho-D-ribosyl)imidazole-4-carboxamide from 5-amino-1-(5-phospho-D-ribosyl)imidazole-4-carboxamide (10-formyl THF route): step 1/1. Its pathway is purine metabolism; IMP biosynthesis via de novo pathway; IMP from 5-formamido-1-(5-phospho-D-ribosyl)imidazole-4-carboxamide: step 1/1. This chain is Bifunctional purine biosynthesis protein PurH, found in Bacteroides thetaiotaomicron (strain ATCC 29148 / DSM 2079 / JCM 5827 / CCUG 10774 / NCTC 10582 / VPI-5482 / E50).